Here is a 99-residue protein sequence, read N- to C-terminus: Nucleoid-associated protein LACR_0106 (99 aa).

This sequence belongs to the YbaB/EbfC family. As to quaternary structure, homodimer.

The protein resides in the cytoplasm. It localises to the nucleoid. Binds to DNA and alters its conformation. May be involved in regulation of gene expression, nucleoid organization and DNA protection. The polypeptide is Nucleoid-associated protein LACR_0106 (Lactococcus lactis subsp. cremoris (strain SK11)).